A 181-amino-acid chain; its full sequence is Peptidyl-tRNA hydrolase 2, mitochondrial (181 aa).

Residues 10-32 (YLVHPGTLSLAAGVACGMCLGWG) traverse the membrane as a helical segment. Glycyl lysine isopeptide (Lys-Gly) (interchain with G-Cter in ubiquitin) cross-links involve residues lysine 78, lysine 83, lysine 97, lysine 108, lysine 117, and lysine 179.

It belongs to the PTH2 family. In terms of assembly, monomer. In terms of processing, ubiquitinated by PRKN during mitophagy, leading to its degradation and enhancement of mitophagy. Deubiquitinated by USP30.

It localises to the mitochondrion outer membrane. The catalysed reaction is an N-acyl-L-alpha-aminoacyl-tRNA + H2O = an N-acyl-L-amino acid + a tRNA + H(+). Peptidyl-tRNA hydrolase which releases tRNAs from the ribosome during protein synthesis. Promotes caspase-independent apoptosis by regulating the function of two transcriptional regulators, AES and TLE1. The polypeptide is Peptidyl-tRNA hydrolase 2, mitochondrial (Ptrh2) (Mus musculus (Mouse)).